Reading from the N-terminus, the 213-residue chain is Orotate phosphoribosyltransferase (213 aa).

Residue Lys26 participates in 5-phospho-alpha-D-ribose 1-diphosphate binding. Position 34–35 (34–35) interacts with orotate; sequence FF. Residues 72–73, Arg99, Lys100, Lys103, His105, and 124–132 contribute to the 5-phospho-alpha-D-ribose 1-diphosphate site; these read YK and DDVITAGTA. Residues Thr128 and Arg156 each coordinate orotate.

The protein belongs to the purine/pyrimidine phosphoribosyltransferase family. PyrE subfamily. As to quaternary structure, homodimer. It depends on Mg(2+) as a cofactor.

It carries out the reaction orotidine 5'-phosphate + diphosphate = orotate + 5-phospho-alpha-D-ribose 1-diphosphate. It participates in pyrimidine metabolism; UMP biosynthesis via de novo pathway; UMP from orotate: step 1/2. Functionally, catalyzes the transfer of a ribosyl phosphate group from 5-phosphoribose 1-diphosphate to orotate, leading to the formation of orotidine monophosphate (OMP). The sequence is that of Orotate phosphoribosyltransferase from Escherichia coli O45:K1 (strain S88 / ExPEC).